Reading from the N-terminus, the 708-residue chain is uncharacterized protein (708 aa).

Disordered regions lie at residues 1-79 (MHAR…RRSS), 119-301 (AGEF…IHQR), 349-390 (YLSH…GDEN), and 410-461 (SNSF…KRQR). Residues 65-74 (LPPPLPPPPV) are compositionally biased toward pro residues. A compositionally biased stretch (polar residues) spans 238–249 (DEAQSKTGSSSA). The span at 260–274 (SKVSEGSSSLSAGSG) shows a compositional bias: low complexity. Residues 410-419 (SNSFPSSILR) show a composition bias toward polar residues. Over residues 442–461 (VGEKRPGEGSDLEEGSKRQR) the composition is skewed to basic and acidic residues.

This is an uncharacterized protein from Arabidopsis thaliana (Mouse-ear cress).